Consider the following 645-residue polypeptide: 1,4-alpha-glucan branching enzyme GlgB (645 aa).

Aspartate 309 (nucleophile) is an active-site residue. The active-site Proton donor is glutamate 352. Positions valine 619–arginine 645 are disordered. A compositionally biased stretch (polar residues) spans arginine 636–arginine 645.

It belongs to the glycosyl hydrolase 13 family. GlgB subfamily. Monomer.

It carries out the reaction Transfers a segment of a (1-&gt;4)-alpha-D-glucan chain to a primary hydroxy group in a similar glucan chain.. It participates in glycan biosynthesis; glycogen biosynthesis. Its function is as follows. Catalyzes the formation of the alpha-1,6-glucosidic linkages in glycogen by scission of a 1,4-alpha-linked oligosaccharide from growing alpha-1,4-glucan chains and the subsequent attachment of the oligosaccharide to the alpha-1,6 position. In Bacillus mycoides (strain KBAB4) (Bacillus weihenstephanensis), this protein is 1,4-alpha-glucan branching enzyme GlgB.